We begin with the raw amino-acid sequence, 606 residues long: Serine/threonine-protein kinase A-Raf (606 aa).

Residues 19–91 (GTVKVYLPNK…DGEELIVEVL (73 aa)) enclose the RBD domain. Residues 98–144 (MHNFVRKTFFSLAFCDFCLKFLFHGFRCQTCGYKFHQHCSSKVPTVC) form a Phorbol-ester/DAG-type zinc finger. The Zn(2+) site is built by His-99, Cys-112, Cys-115, Cys-125, Cys-128, His-133, Cys-136, and Cys-144. Residues Ser-157 and Ser-162 each carry the phosphoserine modification. Disordered stretches follow at residues 158 to 207 (VQDL…NAPL) and 241 to 290 (TDAA…DKKK). Position 181 is a phosphothreonine (Thr-181). Phosphoserine occurs at positions 186, 257, and 269. A compositionally biased stretch (low complexity) spans 254 to 267 (PRGSPSPASVSSGR). The segment covering 274–289 (SPSEQRERKSLADDKK) has biased composition (basic and acidic residues). A Protein kinase domain is found at 310 to 570 (VQLLKRIGTG…PQILATIELL (261 aa)). Residues 316-324 (IGTGSFGTV) and Lys-336 contribute to the ATP site. A Phosphothreonine modification is found at Thr-318. Asp-429 (proton acceptor) is an active-site residue.

Belongs to the protein kinase superfamily. TKL Ser/Thr protein kinase family. RAF subfamily. In terms of assembly, interacts with TH1L/NELFD. Zn(2+) serves as cofactor. Dephosphorylation by the SHOC2-MRAS-PP1c (SMP) complex consisting of SHOC2, GTP-bound M-Ras/MRAS and the catalytic subunit of protein phosphatase 1 (PPP1CA, PPP1CB or PPP1CC); this relieves inactivation and stimulates kinase activity.

The catalysed reaction is L-seryl-[protein] + ATP = O-phospho-L-seryl-[protein] + ADP + H(+). The enzyme catalyses L-threonyl-[protein] + ATP = O-phospho-L-threonyl-[protein] + ADP + H(+). Functionally, involved in the transduction of mitogenic signals from the cell membrane to the nucleus. May also regulate the TOR signaling cascade. Phosphorylates PFKFB2. The polypeptide is Serine/threonine-protein kinase A-Raf (ARAF) (Sus scrofa (Pig)).